Reading from the N-terminus, the 278-residue chain is Ribosomal RNA small subunit methyltransferase A (278 aa).

6 residues coordinate S-adenosyl-L-methionine: Asn-27, Leu-29, Gly-54, Glu-75, Asp-95, and Asn-118.

Belongs to the class I-like SAM-binding methyltransferase superfamily. rRNA adenine N(6)-methyltransferase family. RsmA subfamily.

It is found in the cytoplasm. It carries out the reaction adenosine(1518)/adenosine(1519) in 16S rRNA + 4 S-adenosyl-L-methionine = N(6)-dimethyladenosine(1518)/N(6)-dimethyladenosine(1519) in 16S rRNA + 4 S-adenosyl-L-homocysteine + 4 H(+). Specifically dimethylates two adjacent adenosines (A1518 and A1519) in the loop of a conserved hairpin near the 3'-end of 16S rRNA in the 30S particle. May play a critical role in biogenesis of 30S subunits. The chain is Ribosomal RNA small subunit methyltransferase A from Chlamydia abortus (strain DSM 27085 / S26/3) (Chlamydophila abortus).